The chain runs to 414 residues: Sex comb on midleg-like protein 4 (414 aa).

Phosphoserine is present on residues Ser55 and Ser65. Polar residues predominate over residues 257–276 (HRGSLHPSSSLYCKRQNSGD). The disordered stretch occupies residues 257–343 (HRGSLHPSSS…DARRPRSRNP (87 aa)). Residues 284 to 304 (AATAGGPRTSPMSSGGPSAPG) show a composition bias toward low complexity. The SAM domain maps to 288 to 354 (GGPRTSPMSS…AWTVEDVVWF (67 aa)). Polar residues predominate over residues 312 to 332 (PKRNTTSLEGNRCASSPSQDA).

This sequence belongs to the SCM family.

Its subcellular location is the nucleus. Putative Polycomb group (PcG) protein. PcG proteins act by forming multiprotein complexes, which are required to maintain the transcriptionally repressive state of homeotic genes throughout development. This is Sex comb on midleg-like protein 4 (SCML4) from Homo sapiens (Human).